Consider the following 69-residue polypeptide: uncharacterized protein (69 aa).

Positions 1 to 16 (MKKIMLFLAMTSILSA) are cleaved as a signal peptide. Residue cysteine 17 is the site of N-palmitoyl cysteine attachment. A lipid anchor (S-diacylglycerol cysteine) is attached at cysteine 17.

It localises to the cell membrane. This is an uncharacterized protein from Bacillus subtilis (strain 168).